A 609-amino-acid polypeptide reads, in one-letter code: Grainyhead-like protein 1 homolog (609 aa).

Residues 1–91 form a transcription activation region; it reads MTQDYDNKRP…EHDHADHEHS (91 aa). The disordered stretch occupies residues 183-207; sequence SDHFTSNNQPPNSQRRTPDSTFSET. A compositionally biased stretch (polar residues) spans 185–206; sequence HFTSNNQPPNSQRRTPDSTFSE. The region spanning 239–465 is the Grh/CP2 DB domain; the sequence is AGNNFEYTLE…DLDTQPVLFI (227 aa). 2 interaction with DNA regions span residues 371 to 380 and 418 to 421; these read TDFSSQKGVK and RKIR.

The protein belongs to the grh/CP2 family. Grainyhead subfamily. Binds DNA as homodimer.

It is found in the nucleus. Functionally, transcription factor involved in epithelial development. Binds directly to the consensus DNA sequence 5'-AACCGGTT-3' and modulates expression of epidermal-specific genes, including XK81A1. Important regulator of DSG1 in the context of epidermal differentiation. Regulates the maintenance of skin barrier. No genetic interaction with GRHL3, nor functional cooperativity due to diverse target gene selectivity during epithelia development. Functions downstream of BMP-signaling cascade modulating endogenous bmp4-responsive targets. This is Grainyhead-like protein 1 homolog from Xenopus laevis (African clawed frog).